A 241-amino-acid polypeptide reads, in one-letter code: 2-C-methyl-D-erythritol 4-phosphate cytidylyltransferase (241 aa).

Belongs to the IspD/TarI cytidylyltransferase family. IspD subfamily.

The catalysed reaction is 2-C-methyl-D-erythritol 4-phosphate + CTP + H(+) = 4-CDP-2-C-methyl-D-erythritol + diphosphate. The protein operates within isoprenoid biosynthesis; isopentenyl diphosphate biosynthesis via DXP pathway; isopentenyl diphosphate from 1-deoxy-D-xylulose 5-phosphate: step 2/6. Its function is as follows. Catalyzes the formation of 4-diphosphocytidyl-2-C-methyl-D-erythritol from CTP and 2-C-methyl-D-erythritol 4-phosphate (MEP). This is 2-C-methyl-D-erythritol 4-phosphate cytidylyltransferase from Pseudoalteromonas translucida (strain TAC 125).